The following is a 461-amino-acid chain: Fumarate hydratase class II (461 aa).

Substrate contacts are provided by residues 98–100, 129–132, 139–141, and Thr187; these read SGT, HPND, and SSN. His188 acts as the Proton donor/acceptor in catalysis. Ser318 is an active-site residue. Substrate-binding positions include Ser319 and 324–326; that span reads KVN.

It belongs to the class-II fumarase/aspartase family. Fumarase subfamily. In terms of assembly, homotetramer.

The protein resides in the cytoplasm. The enzyme catalyses (S)-malate = fumarate + H2O. Its pathway is carbohydrate metabolism; tricarboxylic acid cycle; (S)-malate from fumarate: step 1/1. In terms of biological role, involved in the TCA cycle. Catalyzes the stereospecific interconversion of fumarate to L-malate. This is Fumarate hydratase class II from Rickettsia prowazekii (strain Madrid E).